A 305-amino-acid chain; its full sequence is tRNA pseudouridine synthase B (305 aa).

Residue Asp-41 is the Nucleophile of the active site.

The protein belongs to the pseudouridine synthase TruB family. Type 1 subfamily.

The catalysed reaction is uridine(55) in tRNA = pseudouridine(55) in tRNA. In terms of biological role, responsible for synthesis of pseudouridine from uracil-55 in the psi GC loop of transfer RNAs. This is tRNA pseudouridine synthase B from Prochlorococcus marinus (strain MIT 9301).